Consider the following 489-residue polypeptide: Betaine aldehyde dehydrogenase (489 aa).

K(+) is bound by residues Thr26 and Asp93. Residue 150 to 152 (GAW) coordinates NAD(+). Lys162 (charge relay system) is an active-site residue. An NAD(+)-binding site is contributed by 176-179 (KPSE). K(+) is bound at residue Val180. 229 to 232 (GVET) contacts NAD(+). Leu245 contributes to the K(+) binding site. The Proton acceptor role is filled by Glu251. Positions 253, 285, and 386 each coordinate NAD(+). The Nucleophile role is filled by Cys285. The residue at position 285 (Cys285) is a Cysteine sulfenic acid (-SOH). Lys456 and Gly459 together coordinate K(+). Glu463 functions as the Charge relay system in the catalytic mechanism.

Belongs to the aldehyde dehydrogenase family. As to quaternary structure, dimer of dimers. Requires K(+) as cofactor.

It catalyses the reaction betaine aldehyde + NAD(+) + H2O = glycine betaine + NADH + 2 H(+). It functions in the pathway amine and polyamine biosynthesis; betaine biosynthesis via choline pathway; betaine from betaine aldehyde: step 1/1. Functionally, involved in the biosynthesis of the osmoprotectant glycine betaine. Catalyzes the irreversible oxidation of betaine aldehyde to the corresponding acid. The chain is Betaine aldehyde dehydrogenase from Burkholderia mallei (strain SAVP1).